The following is a 325-amino-acid chain: Olfactory receptor 5T18 (325 aa).

Residues 1 to 22 (MRNITEATFFVLKGLTDNNELQ) lie on the Extracellular side of the membrane. Residue N3 is glycosylated (N-linked (GlcNAc...) asparagine). Transmembrane regions (helical) follow at residues 23 to 43 (IILFLLFLAIYIFTLIGNVGL) and 44 to 64 (IILVVGDSQLHNPMYCFLSVL). Residues 65–97 (SSVDACYSTDITPNMLVGFMSKSKIISFYGCAT) are Extracellular-facing. C95 and C187 form a disulfide bridge. The chain crosses the membrane as a helical span at residues 98 to 118 (QMFLAVTFGTTECFLLAAMAY). Over 119–139 (DRYVAIHDPLLYAVSMSPRVY) the chain is Cytoplasmic. The chain crosses the membrane as a helical span at residues 140–160 (IPLIIASYAGGIVHAIIHTVA). The Extracellular portion of the chain corresponds to 161 to 194 (TFSLSFCRSNEVKHIFCDIPPLLAISCSETYVNE). A helical membrane pass occupies residues 195 to 215 (LLLFFFVSFIELVTILIVLVS). Over 216–234 (YAFILLSILKMNSSEGRRK) the chain is Cytoplasmic. The helical transmembrane segment at 235–255 (VFSTCGAHLTAVSIYYGTILF) threads the bilayer. Topologically, residues 256–269 (MYVRPSSNYSLEHD) are extracellular. The helical transmembrane segment at 270-290 (MIVSTFYTIGIPMLNPIIYSL) threads the bilayer. The Cytoplasmic segment spans residues 291–325 (RNKDVKEAMKRVLRKKINIKHRIKKLNDFSVFLMP).

It belongs to the G-protein coupled receptor 1 family.

The protein localises to the cell membrane. In terms of biological role, potential odorant receptor. This chain is Olfactory receptor 5T18, found in Mus musculus (Mouse).